A 308-amino-acid chain; its full sequence is Ribose 1,5-bisphosphate isomerase (308 aa).

Substrate contacts are provided by residues 24–27 and arginine 67; that span reads RGAG. Residue cysteine 129 is the Proton acceptor of the active site. Catalysis depends on aspartate 198, which acts as the Proton donor. Substrate-binding positions include 208 to 209 and lysine 234; that span reads NK.

It belongs to the eIF-2B alpha/beta/delta subunits family. R15P isomerase subfamily.

It catalyses the reaction alpha-D-ribose 1,5-bisphosphate = D-ribulose 1,5-bisphosphate. Catalyzes the isomerization of ribose 1,5-bisphosphate (R15P) to ribulose 1,5-bisphosphate (RuBP), the CO(2) acceptor and substrate for RubisCO. Functions in an archaeal AMP degradation pathway, together with AMP phosphorylase and RubisCO. This Methanocaldococcus jannaschii (strain ATCC 43067 / DSM 2661 / JAL-1 / JCM 10045 / NBRC 100440) (Methanococcus jannaschii) protein is Ribose 1,5-bisphosphate isomerase.